The chain runs to 141 residues: Nucleoside diphosphate kinase (141 aa).

The ATP site is built by K11, F59, R87, T93, R104, and N114. The Pros-phosphohistidine intermediate role is filled by H117.

It belongs to the NDK family. As to quaternary structure, homotetramer. Mg(2+) serves as cofactor.

The protein localises to the cytoplasm. The enzyme catalyses a 2'-deoxyribonucleoside 5'-diphosphate + ATP = a 2'-deoxyribonucleoside 5'-triphosphate + ADP. It catalyses the reaction a ribonucleoside 5'-diphosphate + ATP = a ribonucleoside 5'-triphosphate + ADP. Major role in the synthesis of nucleoside triphosphates other than ATP. The ATP gamma phosphate is transferred to the NDP beta phosphate via a ping-pong mechanism, using a phosphorylated active-site intermediate. The sequence is that of Nucleoside diphosphate kinase from Histophilus somni (strain 2336) (Haemophilus somnus).